The sequence spans 233 residues: Ribose-5-phosphate isomerase A (233 aa).

Substrate contacts are provided by residues 28–31 (TGST), 83–86 (DGAD), and 96–99 (KGGG). Glu105 serves as the catalytic Proton acceptor. A substrate-binding site is contributed by Lys123.

The protein belongs to the ribose 5-phosphate isomerase family. As to quaternary structure, homodimer.

It catalyses the reaction aldehydo-D-ribose 5-phosphate = D-ribulose 5-phosphate. It participates in carbohydrate degradation; pentose phosphate pathway; D-ribose 5-phosphate from D-ribulose 5-phosphate (non-oxidative stage): step 1/1. Catalyzes the reversible conversion of ribose-5-phosphate to ribulose 5-phosphate. The chain is Ribose-5-phosphate isomerase A from Rhizobium rhizogenes (strain K84 / ATCC BAA-868) (Agrobacterium radiobacter).